A 565-amino-acid polypeptide reads, in one-letter code: DNA-directed RNA polymerase subunit beta C-terminal section (565 aa).

This sequence belongs to the RNA polymerase beta chain family. In terms of assembly, in plastids the minimal PEP RNA polymerase catalytic core is composed of four subunits: alpha, beta, beta', and beta''. When a (nuclear-encoded) sigma factor is associated with the core the holoenzyme is formed, which can initiate transcription.

The protein resides in the plastid. It localises to the chloroplast. The catalysed reaction is RNA(n) + a ribonucleoside 5'-triphosphate = RNA(n+1) + diphosphate. Functionally, DNA-dependent RNA polymerase catalyzes the transcription of DNA into RNA using the four ribonucleoside triphosphates as substrates. This is DNA-directed RNA polymerase subunit beta C-terminal section (rpoB2) from Tetradesmus obliquus (Green alga).